The chain runs to 121 residues: Copper transport protein CCH (121 aa).

N-acetylalanine is present on Ala2. Residues 2–65 (AQTVVLKVGM…TVSKTGKKTS (64 aa)) form the HMA domain. Positions 13 and 16 each coordinate Cu cation. The segment at 70-121 (EAEAEPKAEADPKVETVTETKTEAETKTEAKVDAKADVEPKAAEAETKPSQV) is disordered. The segment covering 73 to 121 (AEPKAEADPKVETVTETKTEAETKTEAKVDAKADVEPKAAEAETKPSQV) has biased composition (basic and acidic residues).

Belongs to the ATX1 family. The cofactor is Cu cation. As to expression, expressed in phloem (at protein level).

In terms of biological role, involved in copper homeostasis. Can complement the yeast mutants atx1 and sod1. The chain is Copper transport protein CCH (CCH) from Arabidopsis thaliana (Mouse-ear cress).